We begin with the raw amino-acid sequence, 437 residues long: Cytochrome b (437 aa).

Residues 45 to 65 (WIWGIVLAFTLVLQIVTGIVL) traverse the membrane as a helical segment. Residues histidine 97 and histidine 111 each coordinate heme b. A run of 9 helical transmembrane segments spans residues 100 to 120 (GASLFFLAVYIHIFRGLYYGS), 129 to 149 (WIVGMVIYLLMMGTAFMGYVL), 156 to 176 (FWGATVITGLFGAIPGIGPSI), 194 to 214 (FFSLHYLLPFVIAALVAIHIW), 248 to 268 (FVIKDLFALALVLLGFFAVVA), 298 to 318 (FLPFYAILRAFAADVWVVILV), 330 to 350 (FFGVIAMFGAIAVMALAPWLD), 365 to 385 (MWFWFLVLDFVVLTWVGAMPT), and 391 to 411 (WISLIASTYWFAYFLVILPLL). The heme b site is built by histidine 198 and histidine 212.

Belongs to the cytochrome b family. As to quaternary structure, the main subunits of complex b-c1 are: cytochrome b, cytochrome c1 and the Rieske protein. Requires heme b as cofactor.

It is found in the cell membrane. Functionally, component of the ubiquinol-cytochrome c reductase complex (complex III or cytochrome b-c1 complex), which is a respiratory chain that generates an electrochemical potential coupled to ATP synthesis. This Rhodobacter capsulatus (Rhodopseudomonas capsulata) protein is Cytochrome b (petB).